A 28-amino-acid chain; its full sequence is Phospholipase A2 pseudexin C chain (28 aa).

Y28 lines the Ca(2+) pocket.

This sequence belongs to the phospholipase A2 family. Group I subfamily. Ca(2+) is required as a cofactor. Expressed by the venom gland.

The protein resides in the secreted. It catalyses the reaction a 1,2-diacyl-sn-glycero-3-phosphocholine + H2O = a 1-acyl-sn-glycero-3-phosphocholine + a fatty acid + H(+). In terms of biological role, PLA2 catalyzes the calcium-dependent hydrolysis of the 2-acyl groups in 3-sn-phosphoglycerides. The protein is Phospholipase A2 pseudexin C chain of Pseudechis porphyriacus (Red-bellied black snake).